A 4544-amino-acid polypeptide reads, in one-letter code: MLTPPLLLLLPLLSALVAAAIDAPKTCSPKQFACRDQITCISKGWRCDGERDCPDGSDEAPEICPQSKAQRCQPNEHNCLGTELCVPMSRLCNGVQDCMDGSDEGPHCRELQGNCSRLGCQHHCVPTLDGPTCYCNSSFQLQADGKTCKDFDECSVYGTCSQLCTNTDGSFICGCVEGYLLQPDNRSCKAKNEPVDRPPVLLIANSQNILATYLSGAQVSTITPTSTRQTTAMDFSYANETVCWVHVGDSAAQTQLKCARMPGLKGFVDEHTINISLSLHHVEQMAIDWLTGNFYFVDDIDDRIFVCNRNGDTCVTLLDLELYNPKGIALDPAMGKVFFTDYGQIPKVERCDMDGQNRTKLVDSKIVFPHGITLDLVSRLVYWADAYLDYIEVVDYEGKGRQTIIQGILIEHLYGLTVFENYLYATNSDNANAQQKTSVIRVNRFNSTEYQVVTRVDKGGALHIYHQRRQPRVRSHACENDQYGKPGGCSDICLLANSHKARTCRCRSGFSLGSDGKSCKKPEHELFLVYGKGRPGIIRGMDMGAKVPDEHMIPIENLMNPRALDFHAETGFIYFADTTSYLIGRQKIDGTERETILKDGIHNVEGVAVDWMGDNLYWTDDGPKKTISVARLEKAAQTRKTLIEGKMTHPRAIVVDPLNGWMYWTDWEEDPKDSRRGRLERAWMDGSHRDIFVTSKTVLWPNGLSLDIPAGRLYWVDAFYDRIETILLNGTDRKIVYEGPELNHAFGLCHHGNYLFWTEYRSGSVYRLERGVGGAPPTVTLLRSERPPIFEIRMYDAQQQQVGTNKCRVNNGGCSSLCLATPGSRQCACAEDQVLDADGVTCLANPSYVPPPQCQPGEFACANSRCIQERWKCDGDNDCLDNSDEAPALCHQHTCPSDRFKCENNRCIPNRWLCDGDNDCGNSEDESNATCSARTCPPNQFSCASGRCIPISWTCDLDDDCGDRSDESASCAYPTCFPLTQFTCNNGRCININWRCDNDNDCGDNSDEAGCSHSCSSTQFKCNSGRCIPEHWTCDGDNDCGDYSDETHANCTNQATRPPGGCHTDEFQCRLDGLCIPLRWRCDGDTDCMDSSDEKSCEGVTHVCDPSVKFGCKDSARCISKAWVCDGDNDCEDNSDEENCESLACRPPSHPCANNTSVCLPPDKLCDGNDDCGDGSDEGELCDQCSLNNGGCSHNCSVAPGEGIVCSCPLGMELGPDNHTCQIQSYCAKHLKCSQKCDQNKFSVKCSCYEGWVLEPDGESCRSLDPFKPFIIFSNRHEIRRIDLHKGDYSVLVPGLRNTIALDFHLSQSALYWTDVVEDKIYRGKLLDNGALTSFEVVIQYGLATPEGLAVDWIAGNIYWVESNLDQIEVAKLDGTLRTTLLAGDIEHPRAIALDPRDGILFWTDWDASLPRIEAASMSGAGRRTVHRETGSGGWPNGLTVDYLEKRILWIDARSDAIYSARYDGSGHMEVLRGHEFLSHPFAVTLYGGEVYWTDWRTNTLAKANKWTGHNVTVVQRTNTQPFDLQVYHPSRQPMAPNPCEANGGQGPCSHLCLINYNRTVSCACPHLMKLHKDNTTCYEFKKFLLYARQMEIRGVDLDAPYYNYIISFTVPDIDNVTVLDYDAREQRVYWSDVRTQAIKRAFINGTGVETVVSADLPNAHGLAVDWVSRNLFWTSYDTNKKQINVARLDGSFKNAVVQGLEQPHGLVVHPLRGKLYWTDGDNISMANMDGSNRTLLFSGQKGPVGLAIDFPESKLYWISSGNHTINRCNLDGSGLEVIDAMRSQLGKATALAIMGDKLWWADQVSEKMGTCSKADGSGSVVLRNSTTLVMHMKVYDESIQLDHKGTNPCSVNNGDCSQLCLPTSETTRSCMCTAGYSLRSGQQACEGVGSFLLYSVHEGIRGIPLDPNDKSDALVPVSGTSLAVGIDFHAENDTIYWVDMGLSTISRAKRDQTWREDVVTNGIGRVEGIAVDWIAGNIYWTDQGFDVIEVARLNGSFRYVVISQGLDKPRAITVHPEKGYLFWTEWGQYPRIERSRLDGTERVVLVNVSISWPNGISVDYQDGKLYWCDARTDKIERIDLETGENREVVLSSNNMDMFSVSVFEDFIYWSDRTHANGSIKRGSKDNATDSVPLRTGIGVQLKDIKVFNRDRQKGTNVCAVANGGCQQLCLYRGRGQRACACAHGMLAEDGASCREYAGYLLYSERTILKSIHLSDERNLNAPVQPFEDPEHMKNVIALAFDYRAGTSPGTPNRIFFSDIHFGNIQQINDDGSRRITIVENVGSVEGLAYHRGWDTLYWTSYTTSTITRHTVDQTRPGAFERETVITMSGDDHPRAFVLDECQNLMFWTNWNEQHPSIMRAALSGANVLTLIEKDIRTPNGLAIDHRAEKLYFSDATLDKIERCEYDGSHRYVILKSEPVHPFGLAVYGEHIFWTDWVRRAVQRANKHVGSNMKLLRVDIPQQPMGIIAVANDTNSCELSPCRINNGGCQDLCLLTHQGHVNCSCRGGRILQDDLTCRAVNSSCRAQDEFECANGECINFSLTCDGVPHCKDKSDEKPSYCNSRRCKKTFRQCSNGRCVSNMLWCNGADDCGDGSDEIPCNKTACGVGEFRCRDGTCIGNSSRCNQFVDCEDASDEMNCSATDCSSYFRLGVKGVLFQPCERTSLCYAPSWVCDGANDCGDYSDERDCPGVKRPRCPLNYFACPSGRCIPMSWTCDKEDDCEHGEDETHCNKFCSEAQFECQNHRCISKQWLCDGSDDCGDGSDEAAHCEGKTCGPSSFSCPGTHVCVPERWLCDGDKDCADGADESIAAGCLYNSTCDDREFMCQNRQCIPKHFVCDHDRDCADGSDESPECEYPTCGPSEFRCANGRCLSSRQWECDGENDCHDQSDEAPKNPHCTSQEHKCNASSQFLCSSGRCVAEALLCNGQDDCGDSSDERGCHINECLSRKLSGCSQDCEDLKIGFKCRCRPGFRLKDDGRTCADVDECSTTFPCSQRCINTHGSYKCLCVEGYAPRGGDPHSCKAVTDEEPFLIFANRYYLRKLNLDGSNYTLLKQGLNNAVALDFDYREQMIYWTDVTTQGSMIRRMHLNGSNVQVLHRTGLSNPDGLAVDWVGGNLYWCDKGRDTIEVSKLNGAYRTVLVSSGLREPRALVVDVQNGYLYWTDWGDHSLIGRIGMDGSSRSVIVDTKITWPNGLTLDYVTERIYWADAREDYIEFASLDGSNRHVVLSQDIPHIFALTLFEDYVYWTDWETKSINRAHKTTGTNKTLLISTLHRPMDLHVFHALRQPDVPNHPCKVNNGGCSNLCLLSPGGGHKCACPTNFYLGSDGRTCVSNCTASQFVCKNDKCIPFWWKCDTEDDCGDHSDEPPDCPEFKCRPGQFQCSTGICTNPAFICDGDNDCQDNSDEANCDIHVCLPSQFKCTNTNRCIPGIFRCNGQDNCGDGEDERDCPEVTCAPNQFQCSITKRCIPRVWVCDRDNDCVDGSDEPANCTQMTCGVDEFRCKDSGRCIPARWKCDGEDDCGDGSDEPKEECDERTCEPYQFRCKNNRCVPGRWQCDYDNDCGDNSDEESCTPRPCSESEFSCANGRCIAGRWKCDGDHDCADGSDEKDCTPRCDMDQFQCKSGHCIPLRWRCDADADCMDGSDEEACGTGVRTCPLDEFQCNNTLCKPLAWKCDGEDDCGDNSDENPEECARFVCPPNRPFRCKNDRVCLWIGRQCDGTDNCGDGTDEEDCEPPTAHTTHCKDKKEFLCRNQRCLSSSLRCNMFDDCGDGSDEEDCSIDPKLTSCATNASICGDEARCVRTEKAAYCACRSGFHTVPGQPGCQDINECLRFGTCSQLCNNTKGGHLCSCARNFMKTHNTCKAEGSEYQVLYIADDNEIRSLFPGHPHSAYEQAFQGDESVRIDAMDVHVKAGRVYWTNWHTGTISYRSLPPAAPPTTSNRHRRQIDRGVTHLNISGLKMPRGIAIDWVAGNVYWTDSGRDVIEVAQMKGENRKTLISGMIDEPHAIVVDPLRGTMYWSDWGNHPKIETAAMDGTLRETLVQDNIQWPTGLAVDYHNERLYWADAKLSVIGSIRLNGTDPIVAADSKRGLSHPFSIDVFEDYIYGVTYINNRVFKIHKFGHSPLVNLTGGLSHASDVVLYHQHKQPEVTNPCDRKKCEWLCLLSPSGPVCTCPNGKRLDNGTCVPVPSPTPPPDAPRPGTCNLQCFNGGSCFLNARRQPKCRCQPRYTGDKCELDQCWEHCRNGGTCAASPSGMPTCRCPTGFTGPKCTQQVCAGYCANNSTCTVNQGNQPQCRCLPGFLGDRCQYRQCSGYCENFGTCQMAADGSRQCRCTAYFEGSRCEVNKCSRCLEGACVVNKQSGDVTCNCTDGRVAPSCLTCVGHCSNGGSCTMNSKMMPECQCPPHMTGPRCEEHVFSQQQPGHIASILIPLLLLLLLVLVAGVVFWYKRRVQGAKGFQHQRMTNGAMNVEIGNPTYKMYEGGEPDDVGGLLDADFALDPDKPTNFTNPVYATLYMGGHGSRHSLASTDEKRELLGRGPEDEIGDPLA.

The signal sequence occupies residues 1–19 (MLTPPLLLLLPLLSALVAA). Topologically, residues 20-4419 (AIDAPKTCSP…EHVFSQQQPG (4400 aa)) are extracellular. LDL-receptor class A domains follow at residues 25 to 66 (KTCS…ICPQ) and 70 to 110 (QRCQ…HCRE). 6 disulfides stabilise this stretch: cysteine 27–cysteine 40, cysteine 34–cysteine 53, cysteine 47–cysteine 64, cysteine 72–cysteine 85, cysteine 79–cysteine 98, and cysteine 92–cysteine 108. Positions 111 to 149 (LQGNCSRLGCQHHCVPTLDGPTCYCNSSFQLQADGKTCK) constitute an EGF-like 1 domain. Asparagine 114 carries N-linked (GlcNAc...) asparagine glycosylation. 6 cysteine pairs are disulfide-bonded: cysteine 115-cysteine 124, cysteine 120-cysteine 133, cysteine 135-cysteine 148, cysteine 154-cysteine 164, cysteine 160-cysteine 173, and cysteine 175-cysteine 188. N-linked (GlcNAc...) asparagine glycosylation occurs at asparagine 136. The EGF-like 2; calcium-binding domain occupies 150–189 (DFDECSVYGTCSQLCTNTDGSFICGCVEGYLLQPDNRSCK). Asparagine 185, asparagine 239, and asparagine 274 each carry an N-linked (GlcNAc...) asparagine glycan. LDL-receptor class B repeat units follow at residues 292–334 (GNFY…DPAM), 335–378 (GKVF…DLVS), and 379–422 (RLVY…FENY). N-linked (GlcNAc...) asparagine glycosylation occurs at asparagine 357. N-linked (GlcNAc...) asparagine glycosylation is present at asparagine 446. The 47-residue stretch at 474 to 520 (RSHACENDQYGKPGGCSDICLLANSHKARTCRCRSGFSLGSDGKSCK) folds into the EGF-like 3 domain. 3 cysteine pairs are disulfide-bonded: cysteine 478–cysteine 493, cysteine 489–cysteine 504, and cysteine 506–cysteine 519. LDL-receptor class B repeat units follow at residues 571-613 (GFIY…DWMG), 614-659 (DNLY…DPLN), 660-710 (GWMY…DIPA), and 711-754 (GRLY…HGNY). Residue asparagine 729 is glycosylated (N-linked (GlcNAc...) (complex) asparagine). The region spanning 803-843 (GTNKCRVNNGGCSSLCLATPGSRQCACAEDQVLDADGVTCL) is the EGF-like 4 domain. Cystine bridges form between cysteine 807–cysteine 818, cysteine 814–cysteine 827, cysteine 829–cysteine 842, cysteine 854–cysteine 866, cysteine 861–cysteine 879, cysteine 873–cysteine 890, cysteine 895–cysteine 907, cysteine 902–cysteine 920, cysteine 914–cysteine 931, cysteine 936–cysteine 948, cysteine 943–cysteine 961, cysteine 955–cysteine 971, cysteine 976–cysteine 989, cysteine 984–cysteine 1002, cysteine 996–cysteine 1011, cysteine 1015–cysteine 1027, cysteine 1022–cysteine 1040, cysteine 1034–cysteine 1051, cysteine 1062–cysteine 1075, cysteine 1069–cysteine 1088, cysteine 1082–cysteine 1097, cysteine 1104–cysteine 1118, cysteine 1112–cysteine 1131, cysteine 1125–cysteine 1140, cysteine 1145–cysteine 1159, cysteine 1152–cysteine 1172, cysteine 1166–cysteine 1182, cysteine 1185–cysteine 1196, cysteine 1192–cysteine 1206, cysteine 1208–cysteine 1221, cysteine 1227–cysteine 1237, cysteine 1233–cysteine 1246, and cysteine 1248–cysteine 1261. LDL-receptor class A domains follow at residues 852 to 892 (PQCQ…LCHQ), 893 to 933 (HTCP…TCSA), 934 to 973 (RTCPPNQFSCASGRCIPISWTCDLDDDCGDRSDESASCAY), 974 to 1013 (PTCFPLTQFTCNNGRCININWRCDNDNDCGDNSDEAGCSH), 1013 to 1053 (HSCS…NCTN), 1060 to 1099 (GGCHTDEFQCRLDGLCIPLRWRCDGDTDCMDSSDEKSCEG), 1102 to 1142 (HVCD…NCES), and 1143 to 1182 (LACRPPSHPCANNTSVCLPPDKLCDGNDDCGDGSDEGELC). Ca(2+) contacts are provided by tryptophan 871, aspartate 874, aspartate 876, aspartate 878, aspartate 884, and glutamate 885. Asparagine 928 carries N-linked (GlcNAc...) asparagine glycosylation. Ca(2+) contacts are provided by tryptophan 1032, aspartate 1035, aspartate 1037, aspartate 1039, aspartate 1045, and glutamate 1046. N-linked (GlcNAc...) asparagine glycosylation is present at asparagine 1050. Ca(2+)-binding residues include tryptophan 1080, aspartate 1083, aspartate 1085, aspartate 1087, aspartate 1093, and glutamate 1094. Asparagine 1154 and asparagine 1155 each carry an N-linked (GlcNAc...) asparagine glycan. EGF-like domains lie at 1183–1222 (DQCSLNNGGCSHNCSVAPGEGIVCSCPLGMELGPDNHTCQ) and 1223–1262 (IQSYCAKHLKCSQKCDQNKFSVKCSCYEGWVLEPDGESCR). Asparagine 1195 and asparagine 1218 each carry an N-linked (GlcNAc...) asparagine glycan. 5 LDL-receptor class B repeats span residues 1309-1355 (SALY…DWIA), 1356-1398 (GNIY…DPRD), 1399-1445 (GILF…DYLE), 1446-1490 (KRIL…YGGE), and 1491-1531 (VYWT…YHPS). Asparagine 1511 carries N-linked (GlcNAc...) (complex) asparagine glycosylation. The EGF-like 7 domain occupies 1536–1579 (APNPCEANGGQGPCSHLCLINYNRTVSCACPHLMKLHKDNTTCY). 3 disulfides stabilise this stretch: cysteine 1540-cysteine 1553, cysteine 1549-cysteine 1563, and cysteine 1565-cysteine 1578. Asparagine 1558, asparagine 1575, asparagine 1616, and asparagine 1645 each carry an N-linked (GlcNAc...) asparagine glycan. LDL-receptor class B repeat units follow at residues 1627–1669 (QRVY…DWVS), 1670–1713 (RNLF…HPLR), 1714–1753 (GKLYWTDGDNISMANMDGSNRTLLFSGQKGPVGLAIDFPE), and 1754–1798 (SKLY…MGDK). Residues asparagine 1723, asparagine 1733, asparagine 1763, and asparagine 1825 are each glycosylated (N-linked (GlcNAc...) asparagine). One can recognise an EGF-like 8 domain in the interval 1846 to 1887 (GTNPCSVNNGDCSQLCLPTSETTRSCMCTAGYSLRSGQQACE). Disulfide bonds link cysteine 1850/cysteine 1861, cysteine 1857/cysteine 1871, and cysteine 1873/cysteine 1886. An N-linked (GlcNAc...) asparagine glycan is attached at asparagine 1933. LDL-receptor class B repeat units follow at residues 1934-1976 (DTIY…DWIA), 1977-2019 (GNIY…HPEK), 2020-2063 (GYLF…DYQD), and 2064-2107 (GKLY…FEDF). N-linked (GlcNAc...) asparagine glycosylation occurs at asparagine 1995. An N6-acetyllysine modification is found at lysine 2009. The N-linked (GlcNAc...) asparagine glycan is linked to asparagine 2048. Asparagine 2117 and asparagine 2127 each carry an N-linked (GlcNAc...) asparagine glycan. The EGF-like 9 domain occupies 2155–2195 (GTNVCAVANGGCQQLCLYRGRGQRACACAHGMLAEDGASCR). 3 disulfides stabilise this stretch: cysteine 2159–cysteine 2170, cysteine 2166–cysteine 2180, and cysteine 2182–cysteine 2194. 5 LDL-receptor class B repeats span residues 2253–2294 (NRIF…HRGW), 2295–2343 (DTLY…DECQ), 2344–2388 (NLMF…DHRA), 2389–2431 (EKLY…YGEH), and 2432–2473 (IFWT…VAND). N-linked (GlcNAc...) asparagine glycosylation is present at asparagine 2472. One can recognise an EGF-like 10 domain in the interval 2478–2518 (ELSPCRINNGGCQDLCLLTHQGHVNCSCRGGRILQDDLTCR). 3 cysteine pairs are disulfide-bonded: cysteine 2482/cysteine 2493, cysteine 2489/cysteine 2503, and cysteine 2505/cysteine 2517. A glycan (N-linked (GlcNAc...) asparagine) is linked at asparagine 2502. The N-linked (GlcNAc...) asparagine glycan is linked to asparagine 2521. LDL-receptor class A domains follow at residues 2522–2563 (SSCR…YCNS), 2564–2602 (RRCKKTFRQCSNGRCVSNMLWCNGADDCGDGSDEIPCNK), 2603–2641 (TACGVGEFRCRDGTCIGNSSRCNQFVDCEDASDEMNCSA), 2642–2690 (TDCS…DCPG), 2694–2732 (PRCPLNYFACPSGRCIPMSWTCDKEDDCEHGEDETHCNK), 2732–2771 (KFCSEAQFECQNHRCISKQWLCDGSDDCGDGSDEAAHCEG), and 2772–2814 (KTCG…GCLY). 6 disulfide bridges follow: cysteine 2524–cysteine 2537, cysteine 2532–cysteine 2550, cysteine 2544–cysteine 2561, cysteine 2566–cysteine 2578, cysteine 2573–cysteine 2591, and cysteine 2585–cysteine 2600. N-linked (GlcNAc...) asparagine glycosylation occurs at asparagine 2539. An N-linked (GlcNAc...) asparagine glycan is attached at asparagine 2601. Cystine bridges form between cysteine 2605-cysteine 2617, cysteine 2612-cysteine 2630, cysteine 2624-cysteine 2639, cysteine 2644-cysteine 2666, cysteine 2660-cysteine 2679, cysteine 2673-cysteine 2688, cysteine 2696-cysteine 2708, cysteine 2703-cysteine 2721, cysteine 2715-cysteine 2730, cysteine 2734-cysteine 2746, cysteine 2741-cysteine 2759, cysteine 2753-cysteine 2769, cysteine 2774-cysteine 2787, cysteine 2781-cysteine 2800, and cysteine 2794-cysteine 2812. N-linked (GlcNAc...) asparagine glycosylation is found at asparagine 2620 and asparagine 2638. N-linked (GlcNAc...) asparagine glycosylation occurs at asparagine 2815. 3 LDL-receptor class A domains span residues 2816 to 2855 (STCDDREFMCQNRQCIPKHFVCDHDRDCADGSDESPECEY), 2856 to 2899 (PTCG…HCTS), and 2902 to 2940 (HKCNASSQFLCSSGRCVAEALLCNGQDDCGDSSDERGCH). Intrachain disulfides connect cysteine 2818-cysteine 2830, cysteine 2825-cysteine 2843, cysteine 2837-cysteine 2853, cysteine 2858-cysteine 2870, cysteine 2865-cysteine 2884, cysteine 2878-cysteine 2897, cysteine 2904-cysteine 2917, cysteine 2912-cysteine 2930, cysteine 2924-cysteine 2939, cysteine 2944-cysteine 2956, cysteine 2952-cysteine 2965, cysteine 2967-cysteine 2980, cysteine 2986-cysteine 2996, cysteine 2992-cysteine 3005, and cysteine 3007-cysteine 3021. Residue asparagine 2905 is glycosylated (N-linked (GlcNAc...) asparagine). One can recognise an EGF-like 11 domain in the interval 2941–2981 (INECLSRKLSGCSQDCEDLKIGFKCRCRPGFRLKDDGRTCA). In terms of domain architecture, EGF-like 12; calcium-binding spans 2982 to 3022 (DVDECSTTFPCSQRCINTHGSYKCLCVEGYAPRGGDPHSCK). N-linked (GlcNAc...) asparagine glycosylation is found at asparagine 3048 and asparagine 3089. LDL-receptor class B repeat units lie at residues 3069–3113 (QMIY…DWVG), 3114–3156 (GNLY…DVQN), 3157–3200 (GYLY…DYVT), 3201–3243 (ERIY…FEDY), and 3244–3284 (VYWT…FHAL). A glycan (N-linked (GlcNAc...) asparagine) is linked at asparagine 3264. The 42-residue stretch at 3290 to 3331 (PNHPCKVNNGGCSNLCLLSPGGGHKCACPTNFYLGSDGRTCV) folds into the EGF-like 13 domain. 3 disulfides stabilise this stretch: cysteine 3294/cysteine 3305, cysteine 3301/cysteine 3315, and cysteine 3317/cysteine 3330. LDL-receptor class A domains are found at residues 3332–3371 (SNCTASQFVCKNDKCIPFWWKCDTEDDCGDHSDEPPDCPE), 3372–3410 (FKCRPGQFQCSTGICTNPAFICDGDNDCQDNSDEANCDI), 3411–3450 (HVCLPSQFKCTNTNRCIPGIFRCNGQDNCGDGEDERDCPE), 3451–3491 (VTCA…NCTQ), 3492–3533 (MTCG…ECDE), 3534–3572 (RTCEPYQFRCKNNRCVPGRWQCDYDNDCGDNSDEESCTP), 3573–3611 (RPCSESEFSCANGRCIAGRWKCDGDHDCADGSDEKDCTP), 3611–3649 (PRCDMDQFQCKSGHCIPLRWRCDADADCMDGSDEEACGT), 3652–3692 (RTCP…ECAR), 3693–3733 (FVCP…DCEP), and 3739–3778 (THCKDKKEFLCRNQRCLSSSLRCNMFDDCGDGSDEEDCSI). A glycan (N-linked (GlcNAc...) asparagine) is linked at asparagine 3333. Cystine bridges form between cysteine 3334–cysteine 3346, cysteine 3341–cysteine 3359, cysteine 3353–cysteine 3369, cysteine 3374–cysteine 3386, cysteine 3381–cysteine 3399, cysteine 3393–cysteine 3408, cysteine 3413–cysteine 3426, cysteine 3420–cysteine 3439, cysteine 3433–cysteine 3448, cysteine 3453–cysteine 3466, cysteine 3460–cysteine 3479, cysteine 3473–cysteine 3489, cysteine 3494–cysteine 3507, cysteine 3501–cysteine 3520, cysteine 3514–cysteine 3531, cysteine 3536–cysteine 3548, cysteine 3543–cysteine 3561, cysteine 3555–cysteine 3570, cysteine 3575–cysteine 3587, cysteine 3582–cysteine 3600, cysteine 3594–cysteine 3609, cysteine 3613–cysteine 3625, cysteine 3620–cysteine 3638, cysteine 3632–cysteine 3647, cysteine 3654–cysteine 3666, cysteine 3661–cysteine 3679, cysteine 3673–cysteine 3690, cysteine 3695–cysteine 3709, cysteine 3703–cysteine 3722, cysteine 3716–cysteine 3731, cysteine 3741–cysteine 3754, cysteine 3749–cysteine 3767, cysteine 3761–cysteine 3776, cysteine 3785–cysteine 3798, cysteine 3792–cysteine 3807, cysteine 3809–cysteine 3822, cysteine 3828–cysteine 3838, cysteine 3834–cysteine 3847, and cysteine 3849–cysteine 3860. N-linked (GlcNAc...) asparagine glycosylation occurs at asparagine 3488. N-linked (GlcNAc...) asparagine glycosylation occurs at asparagine 3662. 2 consecutive EGF-like domains span residues 3781–3823 (KLTS…PGCQ) and 3824–3861 (DINECLRFGTCSQLCNNTKGGHLCSCARNFMKTHNTCK). Asparagine 3788 is a glycosylation site (N-linked (GlcNAc...) asparagine). Asparagine 3839 carries N-linked (GlcNAc...) asparagine glycosylation. LDL-receptor class B repeat units lie at residues 3912 to 3954 (GRVY…HLNI), 3970 to 4012 (GNVY…DPLR), 4013 to 4056 (GTMY…DYHN), and 4057 to 4101 (ERLY…FEDY). Residues 3940–3943 (RHRR) carry the Recognition site for proteolytical processing motif. Asparagine 3953 carries an N-linked (GlcNAc...) asparagine glycan. N-linked (GlcNAc...) asparagine glycosylation is found at asparagine 4075 and asparagine 4125. 7 consecutive EGF-like domains span residues 4147 to 4183 (VTNPCDRKKCEWLCLLSPSGPVCTCPNGKRLDNGTCV), 4196 to 4232 (RPGTCNLQCFNGGSCFLNARRQPKCRCQPRYTGDKCE), 4232 to 4268 (ELDQCWEHCRNGGTCAASPSGMPTCRCPTGFTGPKCT), 4268 to 4304 (TQQVCAGYCANNSTCTVNQGNQPQCRCLPGFLGDRCQ), 4304 to 4340 (QYRQCSGYCENFGTCQMAADGSRQCRCTAYFEGSRCE), 4340 to 4375 (EVNKCSRCLEGACVVNKQSGDVTCNCTDGRVAPSCL), and 4373 to 4409 (SCLTCVGHCSNGGSCTMNSKMMPECQCPPHMTGPRCE). 17 disulfide bridges follow: cysteine 4151-cysteine 4160, cysteine 4156-cysteine 4169, cysteine 4171-cysteine 4182, cysteine 4200-cysteine 4210, cysteine 4204-cysteine 4220, cysteine 4222-cysteine 4231, cysteine 4236-cysteine 4246, cysteine 4240-cysteine 4256, cysteine 4258-cysteine 4267, cysteine 4272-cysteine 4282, cysteine 4276-cysteine 4292, cysteine 4294-cysteine 4303, cysteine 4308-cysteine 4318, cysteine 4312-cysteine 4328, cysteine 4330-cysteine 4339, cysteine 4344-cysteine 4352, and cysteine 4347-cysteine 4363. The N-linked (GlcNAc...) asparagine glycan is linked to asparagine 4179. Residues asparagine 4278 and asparagine 4279 are each glycosylated (N-linked (GlcNAc...) asparagine). Asparagine 4364 carries N-linked (GlcNAc...) asparagine glycosylation. 4 disulfides stabilise this stretch: cysteine 4365/cysteine 4374, cysteine 4377/cysteine 4387, cysteine 4381/cysteine 4397, and cysteine 4399/cysteine 4408. The helical transmembrane segment at 4420 to 4444 (HIASILIPLLLLLLLVLVAGVVFWY) threads the bilayer. The Cytoplasmic portion of the chain corresponds to 4445 to 4544 (KRRVQGAKGF…PEDEIGDPLA (100 aa)). An interaction with MAFB region spans residues 4445 to 4544 (KRRVQGAKGF…PEDEIGDPLA (100 aa)). Threonine 4460 bears the Phosphothreonine mark. The short motif at 4502-4507 (FTNPVY) is the NPXY motif element. Tyrosine 4507 is modified (phosphotyrosine). Phosphoserine is present on residues serine 4517, serine 4520, and serine 4523.

The protein belongs to the LDLR family. In terms of assembly, heterodimer of an 85-kDa membrane-bound carboxyl subunit and a non-covalently attached 515-kDa N-terminal subunit. Intracellular domain interacts with MAFB. Found in a complex with PID1/PCLI1, LRP1 and CUBNI. Interacts with SNX17, PID1/PCLI1, PDGF and CUBN. The intracellular domain interacts with SHC1, GULP1 and DAB1. Can weakly interact (via NPXY motif) with DAB2 (via PID domain); the interaction is enhanced by tyrosine phosphorylation of the NPXY motif. Interacts with MDK; promotes neuronal survival. Interacts with LRPAP1; this interaction is followed by rapid internalization. Interacts with uPA/PLAU and PAI1/SERPINE1, either individually or in complex with each other, leading to rapid endocytosis; this interaction is abolished in the presence of LRPAP1/RAP. Also interacts with tPA/PLAT alone or in complex with SERPINE1. Interacts with the urokinase receptor PLAUR; this interaction leads to PLAUR internalization and is impaired in the presence of SORL1. Interacts with PDGFB. Interacts with TAU/MAPT, leading to endocytosis; this interaction is reduced in the presence of LRPAP1/RAP. Interacts with IGFBP3; this interaction mediates cell growth inhibition independently of IGF1. Interacts with ADGRG6. (Microbial infection) Interacts with bacterial exotoxins. As to quaternary structure, (Microbial infection) Interacts with Rift valley fever virus (RVFV) glycoprotein N; this interaction facilitates virus entry. Post-translationally, cleaved into a 85 kDa membrane-spanning subunit (LRP-85) and a 515 kDa large extracellular domain (LRP-515) that remains non-covalently associated. Gamma-secretase-dependent cleavage of LRP-85 releases the intracellular domain from the membrane. The N-terminus is blocked. In terms of processing, phosphorylated on serine and threonine residues. Post-translationally, phosphorylated on tyrosine residues upon stimulation with PDGF. Tyrosine phosphorylation promotes interaction with SHC1. Most abundant in liver, brain and lung.

The protein resides in the cell membrane. Its subcellular location is the membrane. The protein localises to the coated pit. It localises to the cytoplasm. It is found in the nucleus. The protein resides in the golgi outpost. Its subcellular location is the cytoskeleton. The protein localises to the microtubule organizing center. In terms of biological role, endocytic receptor involved in endocytosis and in phagocytosis of apoptotic cells. Required for early embryonic development. Involved in cellular lipid homeostasis. Involved in the plasma clearance of chylomicron remnants and activated LRPAP1 (alpha 2-macroglobulin), as well as the local metabolism of complexes between plasminogen activators and their endogenous inhibitors. Acts as an LRPAP1 alpha-2-macroglobulin receptor. Acts as TAU/MAPT receptor and controls the endocytosis of TAU/MAPT as well as its subsequent spread. May modulate cellular events, such as APP metabolism, kinase-dependent intracellular signaling, neuronal calcium signaling as well as neurotransmission. Also acts as a receptor for IGFBP3 to mediate cell growth inhibition. (Microbial infection) Functions as a receptor for Pseudomonas aeruginosa exotoxin A. The protein is Prolow-density lipoprotein receptor-related protein 1 of Homo sapiens (Human).